A 178-amino-acid chain; its full sequence is ATP synthase subunit delta (178 aa).

The protein belongs to the ATPase delta chain family. In terms of assembly, F-type ATPases have 2 components, F(1) - the catalytic core - and F(0) - the membrane proton channel. F(1) has five subunits: alpha(3), beta(3), gamma(1), delta(1), epsilon(1). F(0) has three main subunits: a(1), b(2) and c(10-14). The alpha and beta chains form an alternating ring which encloses part of the gamma chain. F(1) is attached to F(0) by a central stalk formed by the gamma and epsilon chains, while a peripheral stalk is formed by the delta and b chains.

The protein resides in the cell inner membrane. Functionally, f(1)F(0) ATP synthase produces ATP from ADP in the presence of a proton or sodium gradient. F-type ATPases consist of two structural domains, F(1) containing the extramembraneous catalytic core and F(0) containing the membrane proton channel, linked together by a central stalk and a peripheral stalk. During catalysis, ATP synthesis in the catalytic domain of F(1) is coupled via a rotary mechanism of the central stalk subunits to proton translocation. Its function is as follows. This protein is part of the stalk that links CF(0) to CF(1). It either transmits conformational changes from CF(0) to CF(1) or is implicated in proton conduction. This Marinomonas sp. (strain MWYL1) protein is ATP synthase subunit delta.